Here is a 343-residue protein sequence, read N- to C-terminus: Anthranilate phosphoribosyltransferase (343 aa).

5-phospho-alpha-D-ribose 1-diphosphate is bound by residues G86, 89 to 90, T94, 96 to 99, 114 to 122, and S126; these read GD, NIST, and KHGNRSASG. Position 86 (G86) interacts with anthranilate. A Mg(2+)-binding site is contributed by S98. N117 serves as a coordination point for anthranilate. R172 lines the anthranilate pocket. Residues D231 and E232 each contribute to the Mg(2+) site.

Belongs to the anthranilate phosphoribosyltransferase family. In terms of assembly, homodimer. It depends on Mg(2+) as a cofactor.

The enzyme catalyses N-(5-phospho-beta-D-ribosyl)anthranilate + diphosphate = 5-phospho-alpha-D-ribose 1-diphosphate + anthranilate. It participates in amino-acid biosynthesis; L-tryptophan biosynthesis; L-tryptophan from chorismate: step 2/5. In terms of biological role, catalyzes the transfer of the phosphoribosyl group of 5-phosphorylribose-1-pyrophosphate (PRPP) to anthranilate to yield N-(5'-phosphoribosyl)-anthranilate (PRA). This chain is Anthranilate phosphoribosyltransferase, found in Synechococcus sp. (strain JA-2-3B'a(2-13)) (Cyanobacteria bacterium Yellowstone B-Prime).